Reading from the N-terminus, the 241-residue chain is Acetoacetyl-CoA reductase (241 aa).

Residues 12–14 (RGI), R39, and 82–86 (NAGIT) contribute to the NADP(+) site. Substrate contacts are provided by residues D88 and 141–144 (QMGQ). The active-site Proton acceptor is the Y147. Residue 177–180 (PGYI) coordinates NADP(+). 178–179 (GY) contacts substrate.

The protein belongs to the short-chain dehydrogenases/reductases (SDR) family.

It is found in the cytoplasm. It catalyses the reaction a (3R)-3-hydroxyacyl-CoA + NADP(+) = a 3-oxoacyl-CoA + NADPH + H(+). It participates in biopolymer metabolism; poly-(R)-3-hydroxybutanoate biosynthesis. This Rhizobium meliloti (strain 1021) (Ensifer meliloti) protein is Acetoacetyl-CoA reductase.